We begin with the raw amino-acid sequence, 485 residues long: NADH-quinone oxidoreductase subunit N (485 aa).

The next 14 helical transmembrane spans lie at 10–30, 35–55, 75–95, 104–124, 125–145, 159–179, 203–223, 235–255, 271–291, 297–317, 327–347, 374–394, 408–427, and 449–469; these read AMLPLLIVGLTVVVVMLSIAW, FINATLTVIGLNLALLSLYFV, FYIGLVIVASLATSTFAYPWL, EFYLLVLIATMGGILLASANH, LASLFLGIELISLPLFGLIGY, YMLLSAAASSFLLFGMALLYA, ILAGLGMMIVGLGFKLSLVPF, PAPVSTFLATASKIAIFAVVM, LVLSLIAVASILFGNLMAISQ, LLGYSSIAHLGYLLIALVAVQ, GVYLAGYLFSSLGAFGVVSLM, AVMTVMMLSLAGIPMTLGFIG, WWLTGAVVLGSAIGLYYYLR, and ALTAGGVVVLISAILVLVLGI.

This sequence belongs to the complex I subunit 2 family. NDH-1 is composed of 13 different subunits. Subunits NuoA, H, J, K, L, M, N constitute the membrane sector of the complex.

The protein localises to the cell inner membrane. The catalysed reaction is a quinone + NADH + 5 H(+)(in) = a quinol + NAD(+) + 4 H(+)(out). Its function is as follows. NDH-1 shuttles electrons from NADH, via FMN and iron-sulfur (Fe-S) centers, to quinones in the respiratory chain. The immediate electron acceptor for the enzyme in this species is believed to be ubiquinone. Couples the redox reaction to proton translocation (for every two electrons transferred, four hydrogen ions are translocated across the cytoplasmic membrane), and thus conserves the redox energy in a proton gradient. The sequence is that of NADH-quinone oxidoreductase subunit N from Yersinia enterocolitica serotype O:8 / biotype 1B (strain NCTC 13174 / 8081).